The chain runs to 206 residues: Ribonuclease HII (206 aa).

The RNase H type-2 domain occupies 27–206 (ARIAGVDEAG…CALHRRSFKH (180 aa)). Positions 33, 34, and 125 each coordinate a divalent metal cation.

It belongs to the RNase HII family. The cofactor is Mn(2+). Mg(2+) is required as a cofactor.

It is found in the cytoplasm. The enzyme catalyses Endonucleolytic cleavage to 5'-phosphomonoester.. Its function is as follows. Endonuclease that specifically degrades the RNA of RNA-DNA hybrids. The protein is Ribonuclease HII of Moorella thermoacetica (strain ATCC 39073 / JCM 9320).